A 186-amino-acid polypeptide reads, in one-letter code: uncharacterized protein (186 aa).

CBS domains follow at residues 10–69 (IMKK…KLPP) and 77–133 (ISSG…IIST).

This is an uncharacterized protein from Methanocaldococcus jannaschii (strain ATCC 43067 / DSM 2661 / JAL-1 / JCM 10045 / NBRC 100440) (Methanococcus jannaschii).